A 165-amino-acid polypeptide reads, in one-letter code: U11/U12 small nuclear ribonucleoprotein 25 kDa protein (165 aa).

In terms of domain architecture, Ubiquitin-like spans 52–137; sequence MRLSVVKLDG…IRNNSQVTFM (86 aa). The interval 145 to 165 is disordered; it reads RGRHSKRKKHRLFRSLHKTSS.

As to quaternary structure, component of the U11/U12 snRNPs that are part of the U12-type spliceosome.

Its subcellular location is the nucleus. In Arabidopsis thaliana (Mouse-ear cress), this protein is U11/U12 small nuclear ribonucleoprotein 25 kDa protein (SNRNP25).